The sequence spans 175 residues: Large ribosomal subunit protein uL10 (175 aa).

Belongs to the universal ribosomal protein uL10 family. In terms of assembly, part of the ribosomal stalk of the 50S ribosomal subunit. The N-terminus interacts with L11 and the large rRNA to form the base of the stalk. The C-terminus forms an elongated spine to which L12 dimers bind in a sequential fashion forming a multimeric L10(L12)X complex.

Its function is as follows. Forms part of the ribosomal stalk, playing a central role in the interaction of the ribosome with GTP-bound translation factors. This is Large ribosomal subunit protein uL10 from Synechococcus sp. (strain WH7803).